A 158-amino-acid polypeptide reads, in one-letter code: 2-C-methyl-D-erythritol 2,4-cyclodiphosphate synthase (158 aa).

A divalent metal cation-binding residues include Asp-9 and His-11. 4-CDP-2-C-methyl-D-erythritol 2-phosphate contacts are provided by residues 9 to 11 (DVH) and 35 to 36 (HS). His-43 is an a divalent metal cation binding site. 4-CDP-2-C-methyl-D-erythritol 2-phosphate contacts are provided by residues 57-59 (DIG), 62-66 (FPDTD), 133-136 (TTTE), Phe-140, and Arg-143.

This sequence belongs to the IspF family. Homotrimer. A divalent metal cation serves as cofactor.

The catalysed reaction is 4-CDP-2-C-methyl-D-erythritol 2-phosphate = 2-C-methyl-D-erythritol 2,4-cyclic diphosphate + CMP. It functions in the pathway isoprenoid biosynthesis; isopentenyl diphosphate biosynthesis via DXP pathway; isopentenyl diphosphate from 1-deoxy-D-xylulose 5-phosphate: step 4/6. Its function is as follows. Involved in the biosynthesis of isopentenyl diphosphate (IPP) and dimethylallyl diphosphate (DMAPP), two major building blocks of isoprenoid compounds. Catalyzes the conversion of 4-diphosphocytidyl-2-C-methyl-D-erythritol 2-phosphate (CDP-ME2P) to 2-C-methyl-D-erythritol 2,4-cyclodiphosphate (ME-CPP) with a corresponding release of cytidine 5-monophosphate (CMP). This Actinobacillus pleuropneumoniae serotype 5b (strain L20) protein is 2-C-methyl-D-erythritol 2,4-cyclodiphosphate synthase.